The following is a 1068-amino-acid chain: TSC22 domain family protein 1 (1068 aa).

Positions 1–98 (MHQPPESTAA…SQAQLQAQPL (98 aa)) are required for interaction with TGFBR1 and promotion of TGF-beta signaling. Disordered regions lie at residues 23–110 (AHPA…KKSG), 125–288 (ISSN…SPAS), and 602–623 (YSQA…QQLQ). Low complexity predominate over residues 36–55 (GSASALNAAGTGVGSSATSS). A compositionally biased stretch (pro residues) spans 58–70 (FPPPSLLQPPPPA). A compositionally biased stretch (low complexity) spans 84-100 (SLNLLSQAQLQAQPLAP). Residues 133-142 (EDTESYDDLD) show a composition bias toward acidic residues. A compositionally biased stretch (basic residues) spans 216-240 (HPHHLHHHHHIHHGHHLQHGHHHPS). Low complexity predominate over residues 241–250 (HVAVASASIP). Residues 261–271 (KLSTTGSSDSI) show a composition bias toward polar residues. Ser-263 is subject to Phosphoserine. The span at 272 to 288 (TPVAPTSAVSSSGSPAS) shows a compositional bias: low complexity. The segment covering 609-620 (VQTPLPGAPPPQ) has biased composition (pro residues). Residues 1000–1021 (VLKEQIKELIEKNSQLEQENNL) are leucine-zipper. The tract at residues 1032-1068 (AQFQAQLQTGSPPATTQPQGTTQPPAQPASQGSGPTA) is disordered. The span at 1039 to 1068 (QTGSPPATTQPQGTTQPPAQPASQGSGPTA) shows a compositional bias: low complexity.

The protein belongs to the TSC-22/Dip/Bun family. In terms of assembly, forms homodimers. Forms heterodimers. Component of a complex composed of TSC22D1 (via N-terminus), TGFBR1 and TGFBR2; the interaction between TSC22D1 and TGFBR1 is inhibited by SMAD7 and promoted by TGFB1. Interacts with SMAD7; the interaction requires TGF-beta and the interaction is inhibited by TGFBR1. Interacts with TPT1/fortilin; interaction results in the destabilization of TSC22D1 protein and prevents TSC22D1-mediated apoptosis. Interacts with SMAD4 (via N-terminus). Interacts with ACVRL1/ALK1, ACVR1/ALK2, BMPR1A/ALK3, ACVR1B/ALK4, BMPR1B/ALK6, ACVR2A/ACTRII, and BMPR2. Interacts with SMAD6. Interacts with TFE3; the interaction is enhanced in the presence of TGF-beta. As to quaternary structure, forms a heterodimer with TSC22D4/THG1. Forms a heterodimer with TSC22D4/THG1. Interacts with histone H1-2. Interacts with GNL3.

Its subcellular location is the cytoplasm. The protein resides in the nucleus. It is found in the cell membrane. It localises to the mitochondrion. Transcriptional repressor. Acts on the C-type natriuretic peptide (CNP) promoter. Acts to promote CASP3-mediated apoptosis. Positively regulates TGF-beta signaling by interacting with SMAD7 which inhibits binding of SMAD7 to TGFBR1, preventing recruitment of SMURF ubiquitin ligases to TGFBR1 and inhibiting SMURF-mediated ubiquitination and degradation of TGFBR1. Contributes to enhancement of TGF-beta signaling by binding to and modulating the transcription activator activity of SMAD4. Promotes TGF-beta-induced transcription of COL1A2; via its interaction with TFE3 at E-boxes in the gene proximal promoter. Plays a role in the repression of hematopoietic precursor cell growth. Promotes IL2 deprivation-induced apoptosis in T-lymphocytes, via repression of TSC22D3/GILZ transcription and activation of the caspase cascade. In terms of biological role, may act to negatively regulate TGFB3 signaling and thereby inhibit cell death in mammary gland cells. Its function is as follows. Positively regulates cell death in response to TGFB3 during mammary gland involution. This Macaca fascicularis (Crab-eating macaque) protein is TSC22 domain family protein 1.